A 302-amino-acid polypeptide reads, in one-letter code: RNA polymerase II holoenzyme cyclin-like subunit (302 aa).

In terms of domain architecture, Cyclin N-terminal spans 53–142 (QQLIKLGKRM…LGECEFSLIS (90 aa)).

The protein belongs to the cyclin family. Cyclin C subfamily. In terms of assembly, component of the srb8-11 complex, a regulatory module of the Mediator complex.

Its subcellular location is the nucleus. Its function is as follows. Component of the srb8-11 complex. The srb8-11 complex is a regulatory module of the Mediator complex which is itself involved in regulation of basal and activated RNA polymerase II-dependent transcription. The srb8-11 complex may be involved in the transcriptional repression of a subset of genes regulated by Mediator. It may inhibit the association of the Mediator complex with RNA polymerase II to form the holoenzyme complex. The srb8-11 complex phosphorylates the C-terminal domain (CTD) of the largest subunit of RNA polymerase II. This chain is RNA polymerase II holoenzyme cyclin-like subunit (ssn8), found in Aspergillus clavatus (strain ATCC 1007 / CBS 513.65 / DSM 816 / NCTC 3887 / NRRL 1 / QM 1276 / 107).